A 599-amino-acid chain; its full sequence is Dictomallein-2 (599 aa).

Positions methionine 1–cysteine 20 are cleaved as a signal peptide. Residues proline 145 to tyrosine 407 enclose the Peptidase M66 domain. Histidine 298 provides a ligand contact to Zn(2+). Residue glutamate 299 is part of the active site. Zn(2+) is bound by residues histidine 302 and histidine 308.

It belongs to the dictomallein family. Zn(2+) is required as a cofactor.

The protein resides in the secreted. The polypeptide is Dictomallein-2 (dtmlB) (Dictyostelium discoideum (Social amoeba)).